The following is a 595-amino-acid chain: Adenine deaminase 2 (595 aa).

It belongs to the metallo-dependent hydrolases superfamily. Adenine deaminase family. It depends on Mn(2+) as a cofactor.

The catalysed reaction is adenine + H2O + H(+) = hypoxanthine + NH4(+). The sequence is that of Adenine deaminase 2 from Rhizobium johnstonii (strain DSM 114642 / LMG 32736 / 3841) (Rhizobium leguminosarum bv. viciae).